The primary structure comprises 255 residues: Methionine aminopeptidase (255 aa).

Residue H76 participates in substrate binding. The a divalent metal cation site is built by D93, D104, and H167. Substrate is bound at residue H174. 2 residues coordinate a divalent metal cation: E201 and E232.

It belongs to the peptidase M24A family. Methionine aminopeptidase type 1 subfamily. Monomer. Requires Co(2+) as cofactor. It depends on Zn(2+) as a cofactor. Mn(2+) is required as a cofactor. Fe(2+) serves as cofactor.

It carries out the reaction Release of N-terminal amino acids, preferentially methionine, from peptides and arylamides.. In terms of biological role, removes the N-terminal methionine from nascent proteins. The N-terminal methionine is often cleaved when the second residue in the primary sequence is small and uncharged (Met-Ala-, Cys, Gly, Pro, Ser, Thr, or Val). Requires deformylation of the N(alpha)-formylated initiator methionine before it can be hydrolyzed. This Treponema pallidum (strain Nichols) protein is Methionine aminopeptidase.